Consider the following 313-residue polypeptide: Porphobilinogen deaminase (313 aa).

S-(dipyrrolylmethanemethyl)cysteine is present on Cys-242.

This sequence belongs to the HMBS family. Monomer. Dipyrromethane is required as a cofactor.

The catalysed reaction is 4 porphobilinogen + H2O = hydroxymethylbilane + 4 NH4(+). Its pathway is porphyrin-containing compound metabolism; protoporphyrin-IX biosynthesis; coproporphyrinogen-III from 5-aminolevulinate: step 2/4. In terms of biological role, tetrapolymerization of the monopyrrole PBG into the hydroxymethylbilane pre-uroporphyrinogen in several discrete steps. The chain is Porphobilinogen deaminase from Photorhabdus laumondii subsp. laumondii (strain DSM 15139 / CIP 105565 / TT01) (Photorhabdus luminescens subsp. laumondii).